Consider the following 577-residue polypeptide: Arginine--tRNA ligase (577 aa).

The 'HIGH' region signature appears at 122 to 132; sequence PNVAKEMHVGH.

It belongs to the class-I aminoacyl-tRNA synthetase family. As to quaternary structure, monomer.

Its subcellular location is the cytoplasm. The enzyme catalyses tRNA(Arg) + L-arginine + ATP = L-arginyl-tRNA(Arg) + AMP + diphosphate. The sequence is that of Arginine--tRNA ligase from Escherichia coli O127:H6 (strain E2348/69 / EPEC).